Consider the following 273-residue polypeptide: tRNA pseudouridine synthase A (273 aa).

The active-site Nucleophile is the D52. Y110 is a substrate binding site.

This sequence belongs to the tRNA pseudouridine synthase TruA family. In terms of assembly, homodimer.

It carries out the reaction uridine(38/39/40) in tRNA = pseudouridine(38/39/40) in tRNA. Its function is as follows. Formation of pseudouridine at positions 38, 39 and 40 in the anticodon stem and loop of transfer RNAs. This Cupriavidus pinatubonensis (strain JMP 134 / LMG 1197) (Cupriavidus necator (strain JMP 134)) protein is tRNA pseudouridine synthase A.